A 148-amino-acid chain; its full sequence is MKKITGQVKLQIPAGKANPAPPIGPALGQQGVNIMEFCKQFNAKTQAEAKEALIIPVVITVYADRSFTFILKTPPAAVLIKKAAGLHTEKKKGSGAKKPGKEKVGQITRAQLEEIAKKKIQDTTAASLEACMSTIAGTARSMGIDVVG.

It belongs to the universal ribosomal protein uL11 family. As to quaternary structure, part of the ribosomal stalk of the 50S ribosomal subunit. Interacts with L10 and the large rRNA to form the base of the stalk. L10 forms an elongated spine to which L12 dimers bind in a sequential fashion forming a multimeric L10(L12)X complex. Post-translationally, one or more lysine residues are methylated.

Forms part of the ribosomal stalk which helps the ribosome interact with GTP-bound translation factors. The chain is Large ribosomal subunit protein uL11 from Myxococcus xanthus (strain DK1622).